Reading from the N-terminus, the 309-residue chain is Beta-ketoacyl-[acyl-carrier-protein] synthase III (309 aa).

Catalysis depends on residues Cys-111 and His-236. The interval 237 to 241 (QANVR) is ACP-binding. Asn-266 is a catalytic residue.

Belongs to the thiolase-like superfamily. FabH family. As to quaternary structure, homodimer.

Its subcellular location is the cytoplasm. It catalyses the reaction malonyl-[ACP] + acetyl-CoA + H(+) = 3-oxobutanoyl-[ACP] + CO2 + CoA. It participates in lipid metabolism; fatty acid biosynthesis. Functionally, catalyzes the condensation reaction of fatty acid synthesis by the addition to an acyl acceptor of two carbons from malonyl-ACP. Catalyzes the first condensation reaction which initiates fatty acid synthesis and may therefore play a role in governing the total rate of fatty acid production. Possesses both acetoacetyl-ACP synthase and acetyl transacylase activities. Its substrate specificity determines the biosynthesis of branched-chain and/or straight-chain of fatty acids. This Aquifex aeolicus (strain VF5) protein is Beta-ketoacyl-[acyl-carrier-protein] synthase III.